A 94-amino-acid polypeptide reads, in one-letter code: MKKIKLQELKDSEILEQLEEARKVLRNSRFQYGVARSLENPKIISNTKKKIAKLLTIQRERQLKANPGERKSRVFSRAKRKKKNLARLSAKAKG.

Residues 65–94 form a disordered region; it reads ANPGERKSRVFSRAKRKKKNLARLSAKAKG. Basic residues predominate over residues 73–94; it reads RVFSRAKRKKKNLARLSAKAKG.

It belongs to the universal ribosomal protein uL29 family.

This Leptospira interrogans serogroup Icterohaemorrhagiae serovar copenhageni (strain Fiocruz L1-130) protein is Large ribosomal subunit protein uL29.